The primary structure comprises 193 residues: NADH-quinone oxidoreductase subunit B (193 aa).

[4Fe-4S] cluster is bound by residues cysteine 72, cysteine 73, cysteine 137, and cysteine 167.

Belongs to the complex I 20 kDa subunit family. As to quaternary structure, NDH-1 is composed of 14 different subunits. Subunits NuoB, C, D, E, F, and G constitute the peripheral sector of the complex. [4Fe-4S] cluster is required as a cofactor.

The protein localises to the cell inner membrane. The enzyme catalyses a quinone + NADH + 5 H(+)(in) = a quinol + NAD(+) + 4 H(+)(out). Its function is as follows. NDH-1 shuttles electrons from NADH, via FMN and iron-sulfur (Fe-S) centers, to quinones in the respiratory chain. Couples the redox reaction to proton translocation (for every two electrons transferred, four hydrogen ions are translocated across the cytoplasmic membrane), and thus conserves the redox energy in a proton gradient. This Brucella anthropi (strain ATCC 49188 / DSM 6882 / CCUG 24695 / JCM 21032 / LMG 3331 / NBRC 15819 / NCTC 12168 / Alc 37) (Ochrobactrum anthropi) protein is NADH-quinone oxidoreductase subunit B.